We begin with the raw amino-acid sequence, 452 residues long: MAAKVADDVANLKLDDSNTKPASGAAENGDKPTGDAEHDDSDDDNEAEDGAPEAGEGAAKKKKKRKPRKKKKAAGAAGAGGAKVQTAPPRVRIDEVFPNDSYPEGEIQEYVNENAYRTTNEEKRHLDRMNNDFLTEYRKGAEIHREVRQWAQKWIKPGMGLTEIAEGIEDSVRALTGHQGLGNGDAQIAGMGFPTGLSINHCAAHYTPNAGNKMVVNYEDVMKVDFGVHINGRIVDSAFTLTFDPVYDNLINACKAATNAGIKEAGIDVRMSDIGAAIQEVMESYEVEIKGEMLPVKCIRNLNGHSIGHYTIHGGKTVPIVKGGDQTKMEEGETFAIETFGSTGKGYVRDDMETSHYAMKADAPKVALRVSSAKTLLSSITKNFGTLPFCRRYLDRMGHDKYLLGLNNLVSAGIVEAYPPLCDIKGSYTAQSEHTFVLRPTCKEVLSRGDDY.

The tract at residues 1-100 (MAAKVADDVA…VRIDEVFPND (100 aa)) is disordered. Residues 37–51 (EHDDSDDDNEAEDGA) show a composition bias toward acidic residues. Residues 60–73 (KKKKKRKPRKKKKA) show a composition bias toward basic residues. Residue H205 coordinates substrate. D225, D236, and H305 together coordinate a divalent metal cation. H313 lines the substrate pocket. A divalent metal cation contacts are provided by E338 and E433.

Belongs to the peptidase M24A family. Methionine aminopeptidase eukaryotic type 2 subfamily. Requires Co(2+) as cofactor. The cofactor is Zn(2+). It depends on Mn(2+) as a cofactor. Fe(2+) is required as a cofactor.

The protein localises to the cytoplasm. The enzyme catalyses Release of N-terminal amino acids, preferentially methionine, from peptides and arylamides.. Functionally, cotranslationally removes the N-terminal methionine from nascent proteins. The N-terminal methionine is often cleaved when the second residue in the primary sequence is small and uncharged (Met-Ala-, Cys, Gly, Pro, Ser, Thr, or Val). The chain is Methionine aminopeptidase 2-1 from Pyrenophora teres f. teres (strain 0-1) (Barley net blotch fungus).